We begin with the raw amino-acid sequence, 157 residues long: Transcription elongation factor GreA (157 aa).

It belongs to the GreA/GreB family.

In terms of biological role, necessary for efficient RNA polymerase transcription elongation past template-encoded arresting sites. The arresting sites in DNA have the property of trapping a certain fraction of elongating RNA polymerases that pass through, resulting in locked ternary complexes. Cleavage of the nascent transcript by cleavage factors such as GreA or GreB allows the resumption of elongation from the new 3'terminus. GreA releases sequences of 2 to 3 nucleotides. The protein is Transcription elongation factor GreA of Brucella anthropi (strain ATCC 49188 / DSM 6882 / CCUG 24695 / JCM 21032 / LMG 3331 / NBRC 15819 / NCTC 12168 / Alc 37) (Ochrobactrum anthropi).